The sequence spans 76 residues: Dermaseptin-H1 (76 aa).

The N-terminal stretch at 1 to 22 (MDILKKSLFIVLFLGLVSLSIC) is a signal peptide. Positions 23–45 (EEEKRENEDEEEQEDDEQSEEKR) are excised as a propeptide. The segment at 25-44 (EKRENEDEEEQEDDEQSEEK) is disordered. A compositionally biased stretch (acidic residues) spans 30-41 (EDEEEQEDDEQS). Glutamine 73 carries the post-translational modification Glutamine amide. Positions 75–76 (EQ) are excised as a propeptide.

As to expression, expressed by the skin glands.

The protein resides in the secreted. Has antimicrobial activity. The polypeptide is Dermaseptin-H1 (Pithecopus hypochondrialis (Orange-legged leaf frog)).